Reading from the N-terminus, the 297-residue chain is 33 kDa chaperonin (297 aa).

Cystine bridges form between C234–C236 and C267–C270.

It belongs to the HSP33 family. In terms of processing, under oxidizing conditions two disulfide bonds are formed involving the reactive cysteines. Under reducing conditions zinc is bound to the reactive cysteines and the protein is inactive.

Its subcellular location is the cytoplasm. In terms of biological role, redox regulated molecular chaperone. Protects both thermally unfolding and oxidatively damaged proteins from irreversible aggregation. Plays an important role in the bacterial defense system toward oxidative stress. The sequence is that of 33 kDa chaperonin from Pseudoalteromonas atlantica (strain T6c / ATCC BAA-1087).